A 1365-amino-acid polypeptide reads, in one-letter code: Patatin-like phospholipase domain-containing protein 6 (1365 aa).

Topologically, residues 1-50 are lumenal; sequence MGTSSHGLATNSSGAKVAERDGFQDVPAPGEGAAGRICGAQPVPFVPQVL. N-linked (GlcNAc...) asparagine glycosylation occurs at N11. The helical transmembrane segment at 51–71 threads the bilayer; the sequence is GVMIGAGVAVVVTAVLILLVV. Residues 72–1365 lie on the Cytoplasmic side of the membrane; it reads RRLRVPKTPA…QEPPGSATDA (1294 aa). 186-313 contributes to the a nucleoside 3',5'-cyclic phosphate binding site; the sequence is VLGHFEKPLF…VRVVQIIMVR (128 aa). 2 disordered regions span residues 343–427 and 441–463; these read FPSP…RSDF and QEGA…PREQ. Position 345 is a phosphoserine (S345). Polar residues predominate over residues 350-367; it reads TRTSPVRGSKRMVSTSAT. A Phosphothreonine modification is found at T352. A phosphoserine mark is found at S353 and S363. Residues 375–389 are compositionally biased toward pro residues; sequence GRPPDPTGAPLPGPT. S411 is subject to Phosphoserine. T455 carries the phosphothreonine modification. A nucleoside 3',5'-cyclic phosphate contacts are provided by residues 502–624 and 620–740; these read ELAK…VAAR and TVAA…LSQK. Residues 971-1137 form the PNPLA domain; that stretch reads LVLGGGGARG…INNLPADIAR (167 aa). Positions 975 to 980 match the GXGXXG motif; it reads GGGARG. The GXSXG signature appears at 1002–1006; the sequence is GTSIG. S1004 acts as the Nucleophile in catalysis. D1124 acts as the Proton acceptor in catalysis. Residues 1124-1126 carry the DGA/G motif; the sequence is DGG. Residues 1296–1365 form a disordered region; sequence SYVSDGCADG…QEPPGSATDA (70 aa). Positions 1303–1319 are enriched in acidic residues; it reads ADGEESDCLTEYEEDAG.

The protein belongs to the NTE family. Glycosylated.

The protein localises to the endoplasmic reticulum membrane. It carries out the reaction a 1-acyl-sn-glycero-3-phosphocholine + H2O = sn-glycerol 3-phosphocholine + a fatty acid + H(+). The catalysed reaction is 1-hexadecanoyl-sn-glycero-3-phosphocholine + H2O = sn-glycerol 3-phosphocholine + hexadecanoate + H(+). The enzyme catalyses 1-(9Z-octadecenoyl)-sn-glycero-3-phosphocholine + H2O = sn-glycerol 3-phosphocholine + (9Z)-octadecenoate + H(+). It catalyses the reaction 1-hexadecanoylglycerol + H2O = glycerol + hexadecanoate + H(+). It carries out the reaction 2-hexadecanoylglycerol + H2O = glycerol + hexadecanoate + H(+). The catalysed reaction is 1-(9Z-octadecenoyl)-glycerol + H2O = glycerol + (9Z)-octadecenoate + H(+). The enzyme catalyses 2-(9Z-octadecenoyl)-glycerol + H2O = glycerol + (9Z)-octadecenoate + H(+). It catalyses the reaction 2-(5Z,8Z,11Z,14Z-eicosatetraenoyl)-glycerol + H2O = glycerol + (5Z,8Z,11Z,14Z)-eicosatetraenoate + H(+). It carries out the reaction 1-hexadecanoyl-sn-glycero-3-phosphate + H2O = sn-glycerol 3-phosphate + hexadecanoate + H(+). With respect to regulation, inhibited by a series a OPs such as mipafox (MPX), phenyl saligenin phosphate (PSP), phenyl dipentyl phosphinate (PDPP), diisopropyl fluorophosphate and paraoxon. Functionally, phospholipase B that deacylates intracellular phosphatidylcholine (PtdCho), generating glycerophosphocholine (GroPtdCho). This deacylation occurs at both sn-2 and sn-1 positions of PtdCho. Catalyzes the hydrolysis of several naturally occurring membrane-associated lipids. Hydrolyzes lysophospholipids and monoacylglycerols, preferring the 1-acyl to the 2-acyl isomer. Does not catalyze hydrolysis of di- or triacylglycerols or fatty acid amides. This chain is Patatin-like phospholipase domain-containing protein 6 (PNPLA6), found in Pongo abelii (Sumatran orangutan).